The following is a 64-amino-acid chain: Small ribosomal subunit protein bS21 (64 aa).

Belongs to the bacterial ribosomal protein bS21 family.

The chain is Small ribosomal subunit protein bS21 from Oenococcus oeni (strain ATCC BAA-331 / PSU-1).